The sequence spans 526 residues: Tyrosine-protein kinase transforming protein Src (526 aa).

The tract at residues 1-52 is disordered; sequence MGSSKSKPKDPSQRRRSLEPPDSTHHGGFPASQTPDETAAPDAHRNPSRSFG. Residue Gly-2 is the site of N-myristoyl glycine; by host attachment. Positions 7–25 are enriched in basic and acidic residues; sequence KPKDPSQRRRSLEPPDSTH. An SH3 domain is found at 81 to 142; that stretch reads GGVTTFVALY…PSNYVAPSDS (62 aa). The SH2 domain maps to 148–245; it reads WYFGKITRRE…GLCHRLTNVC (98 aa). The region spanning 267–517 is the Protein kinase domain; sequence LRLEAKLGQG…TFKYLQAQLL (251 aa). ATP-binding positions include 273-281 and Lys-295; that span reads LGQGCFGEV. Asp-386 functions as the Proton acceptor in the catalytic mechanism. Tyr-416 carries the phosphotyrosine; by autocatalysis modification.

It belongs to the protein kinase superfamily. Tyr protein kinase family. SRC subfamily. Requires Mn(2+) as cofactor. In terms of processing, the phosphorylated form is termed pp60v-src.

It catalyses the reaction L-tyrosyl-[protein] + ATP = O-phospho-L-tyrosyl-[protein] + ADP + H(+). In terms of biological role, this phosphoprotein, required for both the initiation and the maintenance of neoplastic transformation, is a protein kinase that catalyzes the phosphorylation of tyrosine residues in vitro. This Gallus gallus (Chicken) protein is Tyrosine-protein kinase transforming protein Src (V-SRC).